We begin with the raw amino-acid sequence, 175 residues long: Disulfide bond formation protein B 2 (175 aa).

At 1 to 9 (MYLARTRFL) the chain is on the cytoplasmic side. Residues 10–26 (FFLASLACASIIGVAFY) traverse the membrane as a helical segment. Residues 27–44 (LQQAVGLDPCTLCMVQRA) are Periplasmic-facing. Cys-36 and Cys-39 are joined by a disulfide. Residues 45–61 (AFIACGVLALCAACHAP) traverse the membrane as a helical segment. The Cytoplasmic portion of the chain corresponds to 62-68 (GPTGTRR). The helical transmembrane segment at 69–85 (YSLGLLLVALAGLAGAG) threads the bilayer. The Periplasmic segment spans residues 86-142 (TQVWLQTASADQLIPFITRLEQILSLLSLDMCIDRLRSDALFCAEITWTLFGISLPE). A helical transmembrane segment spans residues 143–161 (WSLLAFTGLALLPLYPLFS). The Cytoplasmic portion of the chain corresponds to 162 to 175 (ELSHWLATRDRGGY).

The protein belongs to the DsbB family.

It is found in the cell inner membrane. Its function is as follows. Required for disulfide bond formation in some periplasmic proteins. Acts by oxidizing the DsbA protein. This is Disulfide bond formation protein B 2 from Pseudomonas syringae pv. syringae (strain B728a).